The following is a 358-amino-acid chain: G-protein coupled receptor 62 (358 aa).

The Extracellular segment spans residues methionine 1–glycine 17. Residue asparagine 3 is glycosylated (N-linked (GlcNAc...) asparagine). Residues phenylalanine 18–valine 38 traverse the membrane as a helical segment. The Cytoplasmic segment spans residues valine 39 to histidine 53. Residues leucine 54–proline 74 traverse the membrane as a helical segment. The Extracellular segment spans residues proline 75–alanine 89. The helical transmembrane segment at alanine 90–leucine 110 threads the bilayer. The Cytoplasmic portion of the chain corresponds to alanine 111–proline 128. Residues alanine 129–glycine 149 traverse the membrane as a helical segment. Residues proline 150 to alanine 176 lie on the Extracellular side of the membrane. The helical transmembrane segment at methionine 177–valine 197 threads the bilayer. The Cytoplasmic segment spans residues alanine 198–lysine 234. A helical transmembrane segment spans residues alanine 235 to cysteine 255. Residues alanine 256–glutamate 268 are Extracellular-facing. A helical membrane pass occupies residues alanine 269–leucine 289. Over glutamine 290 to threonine 358 the chain is Cytoplasmic. Residues valine 334–threonine 358 form a disordered region.

This sequence belongs to the G-protein coupled receptor 1 family. As to quaternary structure, homodimer. Forms heterodimer with MTNR1B. Interacts with ARRB1 and ARRB2 in a spontaneous and agonist-independent manner; leading to the internalization of GPR62 in the endosomal compartment. In terms of tissue distribution, expressed in the brain and testes. Expressed widely, in the brain, including the cerebral cortex, cerebellum, hippocampus,thalamus and pituitary gland. In the testes, expressed specifically in the germ cells.

The protein localises to the cell membrane. Its subcellular location is the endosome membrane. Its function is as follows. Orphan G-protein coupled receptor. Constitutively activates the G(q/11)/inositol phosphate and the G(s)-alpha/cAMP signaling pathways. Has spontaneous activity for beta-arrestin recruitment. Shows a reciprocal regulatory interaction with the melatonin receptor MTNR1B most likely through receptor heteromerization. This chain is G-protein coupled receptor 62 (Gpr62), found in Mus musculus (Mouse).